Reading from the N-terminus, the 272-residue chain is uncharacterized protein (272 aa).

The N-terminal stretch at 1 to 20 (MMEPKSIFLLGLLLFRVGKL) is a signal peptide.

This is an uncharacterized protein from Caenorhabditis elegans.